The following is a 149-amino-acid chain: Calmodulin-3 (149 aa).

A2 carries the post-translational modification N-acetylalanine. EF-hand domains are found at residues D8–N43, P44–D79, D81–K116, and L117–K149. The Ca(2+) site is built by D21, D23, D25, C27, E32, D57, D59, N61, T63, E68, D94, D96, N98, and E105. Position 116 is an N6,N6,N6-trimethyllysine (K116). The Ca(2+) site is built by D130, D132, D134, Q136, and E141.

Belongs to the calmodulin family.

Functionally, calmodulin mediates the control of a large number of enzymes, ion channels and other proteins by Ca(2+). Among the enzymes to be stimulated by the calmodulin-Ca(2+) complex are a number of protein kinases and phosphatases. The chain is Calmodulin-3 (CAM3) from Oryza sativa subsp. japonica (Rice).